Reading from the N-terminus, the 286-residue chain is Acyl-CoA thioesterase 2 (286 aa).

Residues D204, T228, and Q278 each act as charge relay system in the active site.

This sequence belongs to the C/M/P thioester hydrolase family. In terms of assembly, homotetramer.

It carries out the reaction a fatty acyl-CoA + H2O = a fatty acid + CoA + H(+). Thioesterase that has relatively broad substrate specificity, hydrolyzing primarily medium- and long-chain acyl-CoA substrates to free fatty acids and CoA. The protein is Acyl-CoA thioesterase 2 (tesB) of Haemophilus influenzae (strain ATCC 51907 / DSM 11121 / KW20 / Rd).